A 146-amino-acid chain; its full sequence is Snaclec stejaggregin-B subunit beta-1 (146 aa).

Residues 1–23 form the signal peptide; sequence MGRFIFVSFGLLVVFLSLSGTGA. 3 cysteine pairs are disulfide-bonded: C25–C36, C53–C142, and C119–C134. Residues 32–143 enclose the C-type lectin domain; sequence YDLYCYRVFQ…CSQTYPFVCK (112 aa).

It belongs to the snaclec family. In terms of assembly, heteromultimer; disulfide-linked. Expressed by the venom gland.

It localises to the secreted. Its function is as follows. Interferes with one step of hemostasis (modulation of platelet aggregation, or coagulation cascade, for example). In Trimeresurus stejnegeri (Chinese green tree viper), this protein is Snaclec stejaggregin-B subunit beta-1.